A 436-amino-acid polypeptide reads, in one-letter code: MKLYDSYSNQLVEINDELISIYNCGPTVYNHIHIGNARPLITMDVLYRFLKKHNIKTKYVLNITDIDDKIINYALANNLKELEVSEYYFNEYLKIKKALNTLEMINPKVSTHMDKIIDYIQKLIDKQAGYFIGDDVYFDTKKALNYGQLSKRDLENDIVGMRIESAANKHNPNDFILWKKTNKGIMWNTPWGIGRPGWHSECSCLINTYIGEQVSIHGGGIDLKFPHHENENAQNQVLYNKNLAKVWMHFGLVNINNEKMSKSLNNFILVKDLLAEYDYQVVRWFFYQADYKQPIKFSHEIMKQNEKEILKIKNAIYNAKNYLYFNNQLKSLTQIDHFELFDERINDDLDFVGIVDLIHISVKKINILIKENKDMNELKLNLTQLLYMLDILGINFVDLHNDENLALLNTWKNYVDKKDYVKADELRKQLINIGIL.

Residue Cys24 coordinates Zn(2+). A 'HIGH' region motif is present at residues Pro26–Asn36. Residues Cys202, His227, and Glu231 each coordinate Zn(2+). The 'KMSKS' region motif lies at Lys259–Ser263. Lys262 is a binding site for ATP.

This sequence belongs to the class-I aminoacyl-tRNA synthetase family. As to quaternary structure, monomer. The cofactor is Zn(2+).

It localises to the cytoplasm. It carries out the reaction tRNA(Cys) + L-cysteine + ATP = L-cysteinyl-tRNA(Cys) + AMP + diphosphate. The chain is Cysteine--tRNA ligase from Ureaplasma parvum serovar 3 (strain ATCC 700970).